The sequence spans 249 residues: NAD kinase (249 aa).

D45 acts as the Proton acceptor in catalysis. NAD(+) contacts are provided by residues 45–46 (DG), R50, 110–111 (NE), D138, and 149–154 (SGWGMS).

It belongs to the NAD kinase family. A divalent metal cation is required as a cofactor.

It is found in the cytoplasm. The enzyme catalyses NAD(+) + ATP = ADP + NADP(+) + H(+). Involved in the regulation of the intracellular balance of NAD and NADP, and is a key enzyme in the biosynthesis of NADP. Catalyzes specifically the phosphorylation on 2'-hydroxyl of the adenosine moiety of NAD to yield NADP. This is NAD kinase from Saccharolobus islandicus (strain Y.N.15.51 / Yellowstone #2) (Sulfolobus islandicus).